We begin with the raw amino-acid sequence, 547 residues long: Chaperonin GroEL (547 aa).

Residues 29–32 (TLGP), Lys-50, 86–90 (DGTTT), Gly-414, 478–480 (NAA), and Asp-494 contribute to the ATP site.

This sequence belongs to the chaperonin (HSP60) family. As to quaternary structure, forms a cylinder of 14 subunits composed of two heptameric rings stacked back-to-back. Interacts with the co-chaperonin GroES.

It localises to the cytoplasm. The catalysed reaction is ATP + H2O + a folded polypeptide = ADP + phosphate + an unfolded polypeptide.. Together with its co-chaperonin GroES, plays an essential role in assisting protein folding. The GroEL-GroES system forms a nano-cage that allows encapsulation of the non-native substrate proteins and provides a physical environment optimized to promote and accelerate protein folding. This is Chaperonin GroEL from Saccharophagus degradans (strain 2-40 / ATCC 43961 / DSM 17024).